Reading from the N-terminus, the 249-residue chain is Phosphomannomutase 2 (249 aa).

Residue Asp-12 is the Nucleophile of the active site. Mg(2+) contacts are provided by Asp-12 and Asp-14. The active-site Proton donor/acceptor is the Asp-14. Positions 21, 123, 134, 141, 179, and 181 each coordinate alpha-D-mannose 1-phosphate. Asp-209 lines the Mg(2+) pocket.

It belongs to the eukaryotic PMM family. As to quaternary structure, homodimer.

The protein resides in the cytoplasm. It carries out the reaction alpha-D-mannose 1-phosphate = D-mannose 6-phosphate. It functions in the pathway nucleotide-sugar biosynthesis; GDP-alpha-D-mannose biosynthesis; alpha-D-mannose 1-phosphate from D-fructose 6-phosphate: step 2/2. Functionally, involved in the synthesis of the GDP-mannose and dolichol-phosphate-mannose required for a number of critical mannosyl transfer reactions. This chain is Phosphomannomutase 2 (pmmB), found in Dictyostelium discoideum (Social amoeba).